We begin with the raw amino-acid sequence, 245 residues long: 1-(5-phosphoribosyl)-5-[(5-phosphoribosylamino)methylideneamino] imidazole-4-carboxamide isomerase (245 aa).

The Proton acceptor role is filled by Asp7. Asp129 serves as the catalytic Proton donor.

This sequence belongs to the HisA/HisF family.

It is found in the cytoplasm. The enzyme catalyses 1-(5-phospho-beta-D-ribosyl)-5-[(5-phospho-beta-D-ribosylamino)methylideneamino]imidazole-4-carboxamide = 5-[(5-phospho-1-deoxy-D-ribulos-1-ylimino)methylamino]-1-(5-phospho-beta-D-ribosyl)imidazole-4-carboxamide. It functions in the pathway amino-acid biosynthesis; L-histidine biosynthesis; L-histidine from 5-phospho-alpha-D-ribose 1-diphosphate: step 4/9. This chain is 1-(5-phosphoribosyl)-5-[(5-phosphoribosylamino)methylideneamino] imidazole-4-carboxamide isomerase, found in Pectobacterium carotovorum subsp. carotovorum (strain PC1).